Consider the following 477-residue polypeptide: Bifunctional protein HldE (477 aa).

The tract at residues 1–318 (MKVTLPEFER…ENAVRGRAET (318 aa)) is ribokinase. ATP is bound at residue 195 to 198 (NLSE). The active site involves Asp-264. The interval 344 to 477 (MTNGVFDILH…IKKIQKDSDK (134 aa)) is cytidylyltransferase.

In the N-terminal section; belongs to the carbohydrate kinase PfkB family. This sequence in the C-terminal section; belongs to the cytidylyltransferase family. In terms of assembly, homodimer.

It catalyses the reaction D-glycero-beta-D-manno-heptose 7-phosphate + ATP = D-glycero-beta-D-manno-heptose 1,7-bisphosphate + ADP + H(+). The catalysed reaction is D-glycero-beta-D-manno-heptose 1-phosphate + ATP + H(+) = ADP-D-glycero-beta-D-manno-heptose + diphosphate. It participates in nucleotide-sugar biosynthesis; ADP-L-glycero-beta-D-manno-heptose biosynthesis; ADP-L-glycero-beta-D-manno-heptose from D-glycero-beta-D-manno-heptose 7-phosphate: step 1/4. It functions in the pathway nucleotide-sugar biosynthesis; ADP-L-glycero-beta-D-manno-heptose biosynthesis; ADP-L-glycero-beta-D-manno-heptose from D-glycero-beta-D-manno-heptose 7-phosphate: step 3/4. Catalyzes the phosphorylation of D-glycero-D-manno-heptose 7-phosphate at the C-1 position to selectively form D-glycero-beta-D-manno-heptose-1,7-bisphosphate. In terms of biological role, catalyzes the ADP transfer from ATP to D-glycero-beta-D-manno-heptose 1-phosphate, yielding ADP-D-glycero-beta-D-manno-heptose. This Klebsiella pneumoniae (strain 342) protein is Bifunctional protein HldE.